A 540-amino-acid polypeptide reads, in one-letter code: Chaperonin GroEL (540 aa).

Residues 29–32 (TIGP), 86–90 (DGTTT), glycine 413, 477–479 (NAA), and aspartate 493 contribute to the ATP site.

Belongs to the chaperonin (HSP60) family. As to quaternary structure, forms a cylinder of 14 subunits composed of two heptameric rings stacked back-to-back. Interacts with the co-chaperonin GroES.

The protein localises to the cytoplasm. It carries out the reaction ATP + H2O + a folded polypeptide = ADP + phosphate + an unfolded polypeptide.. Together with its co-chaperonin GroES, plays an essential role in assisting protein folding. The GroEL-GroES system forms a nano-cage that allows encapsulation of the non-native substrate proteins and provides a physical environment optimized to promote and accelerate protein folding. The chain is Chaperonin GroEL from Lactobacillus helveticus (strain DPC 4571).